The primary structure comprises 205 residues: Large ribosomal subunit protein uL18 (205 aa).

The protein belongs to the universal ribosomal protein uL18 family. As to quaternary structure, part of the 50S ribosomal subunit. Contacts the 5S and 23S rRNAs.

Its function is as follows. This is one of the proteins that bind and probably mediate the attachment of the 5S RNA into the large ribosomal subunit, where it forms part of the central protuberance. The polypeptide is Large ribosomal subunit protein uL18 (Pyrobaculum aerophilum (strain ATCC 51768 / DSM 7523 / JCM 9630 / CIP 104966 / NBRC 100827 / IM2)).